Reading from the N-terminus, the 424-residue chain is Glucan endo-1,3-alpha-glucosidase agn1 (424 aa).

The N-terminal stretch at 1–20 (MKLVLFLVLLFSALINLTNA) is a signal peptide.

This sequence belongs to the glycosyl hydrolase 71 family. In terms of assembly, monomer. Not glycosylated.

The protein localises to the secreted. The protein resides in the cell wall. It carries out the reaction Endohydrolysis of (1-&gt;3)-alpha-D-glucosidic linkages in isolichenin, pseudonigeran and nigeran.. Its function is as follows. Has a role in cell separation where it is required for the degradation of the cell wall material surrounding the septum (the septum edging) which must be hydrolyzed before full separation of the daughter cells can occur. Hydrolyzes 1,3-alpha-glucan predominantly into pentasaccharides. The sequence is that of Glucan endo-1,3-alpha-glucosidase agn1 (agn1) from Schizosaccharomyces pombe (strain 972 / ATCC 24843) (Fission yeast).